We begin with the raw amino-acid sequence, 290 residues long: Porphobilinogen deaminase (290 aa).

Cys-237 is modified (S-(dipyrrolylmethanemethyl)cysteine).

The protein belongs to the HMBS family. Monomer. Dipyrromethane is required as a cofactor.

It carries out the reaction 4 porphobilinogen + H2O = hydroxymethylbilane + 4 NH4(+). Its pathway is porphyrin-containing compound metabolism; protoporphyrin-IX biosynthesis; coproporphyrinogen-III from 5-aminolevulinate: step 2/4. Its function is as follows. Tetrapolymerization of the monopyrrole PBG into the hydroxymethylbilane pre-uroporphyrinogen in several discrete steps. The protein is Porphobilinogen deaminase of Clostridium botulinum (strain 657 / Type Ba4).